We begin with the raw amino-acid sequence, 370 residues long: 2-Hydroxyacid oxidase 1 (370 aa).

The 365-residue stretch at 1 to 365 (MLPRLICIND…DKTLVRKNPL (365 aa)) folds into the FMN hydroxy acid dehydrogenase domain. Tyrosine 26 is a binding site for glyoxylate. FMN is bound by residues 79 to 81 (ATA), serine 108, and glutamine 130. Tyrosine 132 is a binding site for glyoxylate. Threonine 158 is an FMN binding site. Glyoxylate is bound at residue arginine 167. An N6-succinyllysine modification is found at lysine 184. A phosphoserine mark is found at serine 194 and serine 230. 2 residues coordinate FMN: lysine 236 and serine 258. Residues histidine 260 and arginine 263 each contribute to the glyoxylate site. Histidine 260 (proton acceptor) is an active-site residue. FMN contacts are provided by residues 291–295 (DGGVR) and 314–315 (GR). The Microbody targeting signal motif lies at 368 to 370 (SKI).

Belongs to the FMN-dependent alpha-hydroxy acid dehydrogenase family. As to quaternary structure, homotetramer. FMN is required as a cofactor. As to expression, highly expressed in liver.

Its subcellular location is the peroxisome matrix. The catalysed reaction is a (2S)-2-hydroxycarboxylate + O2 = a 2-oxocarboxylate + H2O2. It catalyses the reaction glycolate + O2 = glyoxylate + H2O2. It carries out the reaction glyoxylate + O2 + H2O = oxalate + H2O2 + H(+). The enzyme catalyses 2-hydroxyhexadecanoate + O2 = 2-oxohexadecanoate + H2O2. The catalysed reaction is 2-hydroxyoctanoate + O2 = 2-oxooctanoate + H2O2. It participates in amino-acid biosynthesis; glycine biosynthesis. Its activity is regulated as follows. Inhibited by its product oxalate. Inhibited by high concentrations of dichlorophenolindophenol (DCIP) in vitro. Functionally, broad substrate specificity (S)-2-hydroxy-acid oxidase that preferentially oxidizes glycolate. The glyoxylate produced by the oxidation of glycolate can then be utilized by alanine-glyoxylate aminotransferase for the peroxisomal synthesis of glycine; this pathway appears to be an important step for the detoxification of glyoxylate which, if allowed to accumulate, may be metabolized to oxalate with formation of kidney stones. Can also catalyze the oxidation of glyoxylate, and long chain hydroxyacids such as 2-hydroxyhexadecanoate and 2-hydroxyoctanoate, albeit with much lower catalytic efficiency. Active in vitro with the artificial electron acceptor 2,6-dichlorophenolindophenol (DCIP), but O2 is believed to be the physiological electron acceptor, leading to the production of H2O2. Is not active on L-lactate and 2-hydroxybutanoate. This chain is 2-Hydroxyacid oxidase 1, found in Homo sapiens (Human).